The following is a 320-amino-acid chain: Heterogeneous nuclear ribonucleoprotein A1 (320 aa).

Residue methionine 1 is modified to N-acetylmethionine. Serine 2 is modified (N-acetylserine; in Heterogeneous nuclear ribonucleoprotein A1, N-terminally processed). Serine 2 bears the Phosphoserine mark. Lysine 3 is modified (N6-acetyllysine; alternate). Lysine 3 is covalently cross-linked (Glycyl lysine isopeptide (Lys-Gly) (interchain with G-Cter in SUMO2); alternate). Serine 4 and serine 6 each carry phosphoserine. The segment at 4–94 is globular A domain; it reads SESPKEPEQL…EPKRAVSRED (91 aa). Lysine 8 is covalently cross-linked (Glycyl lysine isopeptide (Lys-Gly) (interchain with G-Cter in SUMO2)). RRM domains are found at residues 14–97 and 105–184; these read RKLF…DSQR and KKIF…LCKQ. Serine 22 carries the phosphoserine modification. A Glycyl lysine isopeptide (Lys-Gly) (interchain with G-Cter in SUMO2) cross-link involves residue lysine 78. Residues 95–185 are globular B domain; sequence SQRPGAHLTV…EVRKALCKQE (91 aa). Lysine 113 participates in a covalent cross-link: Glycyl lysine isopeptide (Lys-Gly) (interchain with G-Cter in SUMO). Glycyl lysine isopeptide (Lys-Gly) (interchain with G-Cter in SUMO2) cross-links involve residues lysine 179 and lysine 183. Residues 188–216 are disordered; the sequence is SASSSQRGRSGSGNFGGGRGGGFGGNDNF. A Phosphoserine; by MKNK2 modification is found at serine 192. Arginine 194 carries the asymmetric dimethylarginine; alternate modification. Arginine 194 bears the Dimethylated arginine; alternate mark. Arginine 194 is modified (omega-N-methylarginine; alternate). Gly residues predominate over residues 197 to 216; sequence SGSGNFGGGRGGGFGGNDNF. Serine 199 carries the post-translational modification Phosphoserine. An asymmetric dimethylarginine; alternate mark is found at arginine 206, arginine 218, arginine 225, and arginine 232. A Dimethylated arginine; alternate modification is found at arginine 206. Omega-N-methylarginine; alternate is present on residues arginine 206, arginine 218, arginine 225, and arginine 232. The interval 218-240 is RNA-binding RGG-box; sequence RGGNFSGRGGFGGSRGGGGYGGS. Arginine 225 carries the dimethylated arginine; alternate modification. A nuclear targeting sequence region spans residues 268-305; that stretch reads NQSSNFGPMKGGNFGGRSSGPYGGGGQYFAKPRNQGGY. The tract at residues 271–320 is disordered; that stretch reads SNFGPMKGGNFGGRSSGPYGGGGQYFAKPRNQGGYGGSSSSSSYGSGRRF. A compositionally biased stretch (gly residues) spans 276 to 294; the sequence is MKGGNFGGRSSGPYGGGGQ. Arginine 284 bears the Omega-N-methylarginine mark. The residue at position 285 (serine 285) is a Phosphoserine. Lysine 298 bears the N6-acetyllysine; alternate mark. Residue lysine 298 forms a Glycyl lysine isopeptide (Lys-Gly) (interchain with G-Cter in SUMO2); alternate linkage. Arginine 300 is modified (omega-N-methylarginine). A compositionally biased stretch (low complexity) spans 308-320; sequence SSSSSSYGSGRRF. Serine 309 carries the phosphoserine modification. Residues serine 310, serine 311, and serine 312 each carry the phosphoserine; by MKNK2 modification. Residues serine 313 and serine 316 each carry the phosphoserine modification. Arginine 318 carries the omega-N-methylarginine modification.

Identified in the spliceosome C complex. Identified in a IGF2BP1-dependent mRNP granule complex containing untranslated mRNAs. Interacts with SEPT6. Interacts with C9orf72. Interacts with KHDRBS1. Interacts with UBQLN2. Interacts with PPIA/CYPA. Sumoylated.

The protein resides in the nucleus. It is found in the cytoplasm. Involved in the packaging of pre-mRNA into hnRNP particles, transport of poly(A) mRNA from the nucleus to the cytoplasm and modulation of splice site selection. Plays a role in the splicing of pyruvate kinase PKM by binding repressively to sequences flanking PKM exon 9, inhibiting exon 9 inclusion and resulting in exon 10 inclusion and production of the PKM M2 isoform. Binds to the IRES and thereby inhibits the translation of the apoptosis protease activating factor APAF1. May bind to specific miRNA hairpins. The sequence is that of Heterogeneous nuclear ribonucleoprotein A1 (Hnrnpa1) from Rattus norvegicus (Rat).